The following is a 747-amino-acid chain: Beta-glucosidase BoGH3A (747 aa).

Positions 1-26 (MIIGIMKTFLLTICFLSVQTGMVAIA) are cleaved as a signal peptide. Asp-273 is an active-site residue.

Belongs to the glycosyl hydrolase 3 family.

The protein localises to the periplasm. The enzyme catalyses Hydrolysis of terminal, non-reducing beta-D-glucosyl residues with release of beta-D-glucose.. It functions in the pathway glucan metabolism; xyloglucan degradation. Catalyzes the hydrolysis of terminal, non-reducing beta-D-glucosyl residues with release of beta-D-glucose in xyloglucan degradation, leading to remove the backbone 'G' units. This Bacteroides ovatus (strain ATCC 8483 / DSM 1896 / JCM 5824 / BCRC 10623 / CCUG 4943 / NCTC 11153) protein is Beta-glucosidase BoGH3A.